Here is a 155-residue protein sequence, read N- to C-terminus: MSESCPCCSGLQYNACCQPYLTHAATAAEPAVLMRSRYTAYVKHDVDYLIATWHPDLQPEKWRASLAESCQNSQWLGLTILATSPGKTPDEGYVEFAARYISETDSQRTEVMRERSRFLRQHNRWYYIDGVHVQTGRNEPCPCDSGKKYKKCCGQ.

It belongs to the UPF0225 family.

The polypeptide is UPF0225 protein PC1_1977 (Pectobacterium carotovorum subsp. carotovorum (strain PC1)).